The sequence spans 590 residues: Multidrug resistance ABC transporter ATP-binding and permease protein (590 aa).

The next 6 helical transmembrane spans lie at 35–55, 79–99, 150–170, 176–196, 261–281, and 292–312; these read YLFF…QLQV, IALY…LGIF, IPQA…MLQM, LAMI…MTFG, VMML…IYLI, and LGMM…ATFF. Residues 38–317 enclose the ABC transmembrane type-1 domain; it reads FIIGILAGIV…VATFFTELAK (280 aa). Residues 349–584 form the ABC transporter domain; the sequence is LSARHVDFAY…HPLYAKYVSE (236 aa). Position 382–389 (382–389) interacts with ATP; the sequence is GPSGGGKS.

It belongs to the ABC transporter superfamily. Multidrug exporter LmrA (TC 3.A.1.117.1) family. As to quaternary structure, homodimer.

The protein localises to the cell membrane. It carries out the reaction ATP + H2O + xenobioticSide 1 = ADP + phosphate + xenobioticSide 2.. Efflux transporter for a variety of amphiphilic cationic compounds, including antibiotics. This chain is Multidrug resistance ABC transporter ATP-binding and permease protein (lmrA), found in Lactococcus lactis subsp. lactis (strain IL1403) (Streptococcus lactis).